The chain runs to 781 residues: Penicillin-binding protein 1B (781 aa).

Positions 151–322 (FRLAPKLIAM…SLYNPWRNPQ (172 aa)) are transglycosylase. The active-site Proton donor; for transglycosylase activity is glutamate 188. The tract at residues 415–702 (SQLQLKMKNP…ALQIYKDYLN (288 aa)) is transpeptidase. Serine 466 functions as the Acyl-ester intermediate; for transpeptidase activity in the catalytic mechanism. Residues 749–768 (ETSSPSLTPTTETETPPQES) are compositionally biased toward low complexity. A disordered region spans residues 749–781 (ETSSPSLTPTTETETPPQESLWDVLDNPNPPAQ).

This sequence in the N-terminal section; belongs to the glycosyltransferase 51 family. In the C-terminal section; belongs to the transpeptidase family.

Its subcellular location is the cell inner membrane. It catalyses the reaction [GlcNAc-(1-&gt;4)-Mur2Ac(oyl-L-Ala-gamma-D-Glu-L-Lys-D-Ala-D-Ala)](n)-di-trans,octa-cis-undecaprenyl diphosphate + beta-D-GlcNAc-(1-&gt;4)-Mur2Ac(oyl-L-Ala-gamma-D-Glu-L-Lys-D-Ala-D-Ala)-di-trans,octa-cis-undecaprenyl diphosphate = [GlcNAc-(1-&gt;4)-Mur2Ac(oyl-L-Ala-gamma-D-Glu-L-Lys-D-Ala-D-Ala)](n+1)-di-trans,octa-cis-undecaprenyl diphosphate + di-trans,octa-cis-undecaprenyl diphosphate + H(+). The catalysed reaction is Preferential cleavage: (Ac)2-L-Lys-D-Ala-|-D-Ala. Also transpeptidation of peptidyl-alanyl moieties that are N-acyl substituents of D-alanine.. Its pathway is cell wall biogenesis; peptidoglycan biosynthesis. In terms of biological role, cell wall formation. Synthesis of cross-linked peptidoglycan from the lipid intermediates. The enzyme has a penicillin-insensitive transglycosylase N-terminal domain (formation of linear glycan strands) and a penicillin-sensitive transpeptidase C-terminal domain (cross-linking of the peptide subunits). This Haemophilus influenzae (strain ATCC 51907 / DSM 11121 / KW20 / Rd) protein is Penicillin-binding protein 1B (mrcB).